A 304-amino-acid polypeptide reads, in one-letter code: Protein transport protein sec13 (304 aa).

WD repeat units lie at residues 12 to 51 (GHDD…QRLV), 56 to 97 (GHDG…WQRI), 102 to 143 (LHKA…WEHN), 147 to 203 (AHGL…NGYK), 211 to 253 (GHTD…PGEW), and 259 to 298 (NFDA…EWEN).

This sequence belongs to the WD repeat SEC13 family. In terms of assembly, the COPII coat is composed of at least 5 proteins: the sec23/24 complex, the sec13/31 complex, and the protein vtr-7/sar1. Component of the nuclear pore complex (NPC). NPC constitutes the exclusive means of nucleocytoplasmic transport. NPCs allow the passive diffusion of ions and small molecules and the active, nuclear transport receptor-mediated bidirectional transport of macromolecules such as proteins, RNAs, ribonucleoparticles (RNPs), and ribosomal subunits across the nuclear envelope. Due to its 8-fold rotational symmetry, all subunits are present with 8 copies or multiples thereof.

Its subcellular location is the cytoplasmic vesicle. The protein resides in the COPII-coated vesicle membrane. The protein localises to the endoplasmic reticulum membrane. It localises to the nucleus. It is found in the nuclear pore complex. Functionally, component of the coat protein complex II (COPII) which promotes the formation of transport vesicles from the endoplasmic reticulum (ER). The coat has two main functions, the physical deformation of the endoplasmic reticulum membrane into vesicles and the selection of cargo molecules. It also functions as a component of the nuclear pore complex (NPC). NPC components, collectively referred to as nucleoporins (NUPs), can play the role of both NPC structural components and of docking or interaction partners for transiently associated nuclear transport factors. Nup-20/sec13 is required for efficient mRNA export from the nucleus to the cytoplasm and for correct nuclear pore biogenesis and distribution. The protein is Protein transport protein sec13 (nup-20) of Neurospora crassa (strain ATCC 24698 / 74-OR23-1A / CBS 708.71 / DSM 1257 / FGSC 987).